A 147-amino-acid chain; its full sequence is UPF0178 protein VP2328 (147 aa).

This sequence belongs to the UPF0178 family.

The sequence is that of UPF0178 protein VP2328 from Vibrio parahaemolyticus serotype O3:K6 (strain RIMD 2210633).